Here is a 1060-residue protein sequence, read N- to C-terminus: Bumetanide-sensitive sodium-(potassium)-chloride cotransporter (1060 aa).

The Cytoplasmic segment spans residues 1–122; that stretch reads MNDENRFNVS…KSPTPAVGIK (122 aa). The next 2 membrane-spanning stretches (helical) occupy residues 123 to 143 and 154 to 174; these read LGWI…VMLF and GIGL…ITTL. The Cytoplasmic portion of the chain corresponds to 175–197; the sequence is SMSAICTNGEVKGGGIYYIISRS. The next 2 helical transmembrane spans lie at 198–218 and 250–270; these read LGPE…AVAA and IVGT…MDWE. Residues 271-275 are Cytoplasmic-facing; that stretch reads SKAQN. 2 consecutive transmembrane segments (helical) span residues 276–296 and 332–352; these read FLIA…IMGP and FFSV…GANI. At 353-367 the chain is on the cytoplasmic side; the sequence is SGDLKDPASAIPKGT. Residues 368-388 traverse the membrane as a helical segment; sequence LLALLISMVSYTLMVLFAGGG. N-linked (GlcNAc...) asparagine glycosylation is found at asparagine 396, asparagine 404, and asparagine 419. A helical membrane pass occupies residues 432–452; it reads VMQLMSAWGPFIYGGCWAATL. At 453 to 497 the chain is on the cytoplasmic side; sequence STALTNLLSVPRLIQALGVDRIYPGLIFFSKPYGRHGEPYRGYVL. 2 helical membrane-spanning segments follow: residues 498–518 and 563–583; these read TFFV…APLI and CVAI…AIFF. The Cytoplasmic segment spans residues 584 to 642; it reads TLYLIVHYRRPDVNWGSSTQAQMYKTALSSAHALARTGEHVKNYWPQLLVLAGRPQARP. Residues 643 to 663 traverse the membrane as a helical segment; the sequence is ALVDLGNLISKAGSLMIVGDI. An N-linked (GlcNAc...) asparagine glycan is attached at asparagine 816. A helical membrane pass occupies residues 882 to 902; that stretch reads TLDVWWLYDDGGLTILLPYII. Residues 903–1060 lie on the Cytoplasmic side of the membrane; it reads SQRSAWANCK…NHTSVLTFYS (158 aa).

Belongs to the SLC12A transporter family.

The protein resides in the membrane. Functionally, electrically silent transporter system. Mediates sodium and chloride reabsorption. Plays a vital role in the regulation of ionic balance and cell volume. In Manduca sexta (Tobacco hawkmoth), this protein is Bumetanide-sensitive sodium-(potassium)-chloride cotransporter.